The primary structure comprises 372 residues: MGLPLRIFAGNGIGGWCLRLFLFGSLILLLRPLIFYSNTTMKKLKTEYPIYHRHLSALKRNFYYTMDAQLGGIRNVVLINRPCFAASDNFLTLMGQNWYLKERNINVLSDICFPLSNNAHDSLPTFNNGSDLFNPLYFAVLNAATPARFTFHLFNHVMDSVVPFDEAKKFKVRSFPINYAEYADDECQLALKKIRPIPDKYLVSTRVLSDSRYLELSGAVVAFAPDASSSLLFELADIKQHKKTSADILIFLSKDHNLPVSFYDNYKLKYTLHFWQPPSFPDSSTIDDQAKLLFDYVVSQVVKYPYFVTDIYQIHLLGVYLNLKHVYLLENDDVEDAYYERQWMQAFQRKNVVAVAEELQTALRIIEQWKQL.

Residues 1-12 (MGLPLRIFAGNG) are Cytoplasmic-facing. A helical; Signal-anchor for type II membrane protein transmembrane segment spans residues 13 to 35 (IGGWCLRLFLFGSLILLLRPLIF). Residues 36 to 372 (YSNTTMKKLK…LRIIEQWKQL (337 aa)) are Lumenal-facing. N-linked (GlcNAc...) asparagine glycosylation is found at N38 and N128.

The protein resides in the golgi apparatus membrane. In terms of biological role, involved in cell wall biogenesis. Has a role in the addition of Gal-beta1,3 moeities to galactomannans and their subsequent pyruvylation. Has a role in meiosis. The protein is Pyruvylated Gal-beta-1,3-epitope synthesis protein 5 (pvg5) of Schizosaccharomyces pombe (strain 972 / ATCC 24843) (Fission yeast).